A 321-amino-acid chain; its full sequence is Phospho-N-acetylmuramoyl-pentapeptide-transferase (321 aa).

9 helical membrane-spanning segments follow: residues 1 to 21 (MSLLVWGATLISGFIIVFALM), 53 to 73 (TMGGLLFIIAILVTTLWVGGW), 77 to 97 (LQPTTWILMFILVLYGALGFW), 110 to 130 (GLKAWQKLLGQVIGAVILTLV), 145 to 165 (LGVWSLGIWYMLFAIIWLVGF), 174 to 194 (GLDGLVAGQATIAFGAYAVIA), 200 to 220 (YNVMLFCLAVVGSLLGFFVYN), 226 to 248 (IFMGDMGSLALGGALAAVSILLH), and 301 to 321 (IDIVFWSIGLVAAVISVATII).

This sequence belongs to the glycosyltransferase 4 family. MraY subfamily. The cofactor is Mg(2+).

The protein localises to the cell membrane. The catalysed reaction is UDP-N-acetyl-alpha-D-muramoyl-L-alanyl-gamma-D-glutamyl-L-lysyl-D-alanyl-D-alanine + di-trans,octa-cis-undecaprenyl phosphate = Mur2Ac(oyl-L-Ala-gamma-D-Glu-L-Lys-D-Ala-D-Ala)-di-trans,octa-cis-undecaprenyl diphosphate + UMP. It functions in the pathway cell wall biogenesis; peptidoglycan biosynthesis. In terms of biological role, catalyzes the initial step of the lipid cycle reactions in the biosynthesis of the cell wall peptidoglycan: transfers peptidoglycan precursor phospho-MurNAc-pentapeptide from UDP-MurNAc-pentapeptide onto the lipid carrier undecaprenyl phosphate, yielding undecaprenyl-pyrophosphoryl-MurNAc-pentapeptide, known as lipid I. This chain is Phospho-N-acetylmuramoyl-pentapeptide-transferase, found in Lactiplantibacillus plantarum (strain ATCC BAA-793 / NCIMB 8826 / WCFS1) (Lactobacillus plantarum).